The chain runs to 425 residues: Enolase (425 aa).

Glutamine 162 is a (2R)-2-phosphoglycerate binding site. Residue glutamate 204 is the Proton donor of the active site. Positions 241, 284, and 311 each coordinate Mg(2+). (2R)-2-phosphoglycerate contacts are provided by lysine 336, arginine 365, serine 366, and lysine 387. Catalysis depends on lysine 336, which acts as the Proton acceptor.

Belongs to the enolase family. Requires Mg(2+) as cofactor.

It localises to the cytoplasm. Its subcellular location is the secreted. It is found in the cell surface. It catalyses the reaction (2R)-2-phosphoglycerate = phosphoenolpyruvate + H2O. Its pathway is carbohydrate degradation; glycolysis; pyruvate from D-glyceraldehyde 3-phosphate: step 4/5. In terms of biological role, catalyzes the reversible conversion of 2-phosphoglycerate (2-PG) into phosphoenolpyruvate (PEP). It is essential for the degradation of carbohydrates via glycolysis. The chain is Enolase from Brucella anthropi (strain ATCC 49188 / DSM 6882 / CCUG 24695 / JCM 21032 / LMG 3331 / NBRC 15819 / NCTC 12168 / Alc 37) (Ochrobactrum anthropi).